Consider the following 514-residue polypeptide: Ferrochelatase-2, chloroplastic (514 aa).

It belongs to the ferrochelatase family.

It is found in the plastid. The protein resides in the chloroplast. The catalysed reaction is heme b + 2 H(+) = protoporphyrin IX + Fe(2+). It participates in porphyrin-containing compound metabolism; protoheme biosynthesis; protoheme from protoporphyrin-IX: step 1/1. In terms of biological role, catalyzes the ferrous insertion into protoporphyrin IX. This is Ferrochelatase-2, chloroplastic (HEMH) from Cucumis sativus (Cucumber).